Consider the following 538-residue polypeptide: Ribosome-associated complex subunit SSZ1 (538 aa).

Residues 400-538 (PVIVNTPHLK…KTGNAVKGEL (139 aa)) form a peptide-binding domain region. A disordered region spans residues 464–484 (PIPKEENAEEDDESEWSDDEP). Residues 470 to 484 (NAEEDDESEWSDDEP) show a composition bias toward acidic residues. Residues Ser-477 and Ser-480 each carry the phosphoserine modification.

The protein belongs to the heat shock protein 70 family. In terms of assembly, RAC is a heterodimer of the Hsp70/DnaK-type chaperone SSZ1 and the Hsp40/DnaJ-type chaperone ZUO1. RAC associates with ribosomes via ZUO1.

The protein localises to the cytoplasm. Functionally, component of the ribosome-associated complex (RAC), a heterodimeric chaperone complex involved in regulation of accurate translation termination and in folding or maintaining nascent polypeptides in a folding-competent state. RAC stimulates the ATPase activity of the ribosome-associated pool of Hsp70-type chaperones SSB1/SSB2 that bind to the nascent polypeptide chain. SSZ1 is required for ZUO1 to function efficiently as a J-protein for SSB1/SSB2. Also involved in pleiotropic drug resistance by post-translational activation of transcription factor PDR1. The protein is Ribosome-associated complex subunit SSZ1 (SSZ1) of Saccharomyces cerevisiae (strain ATCC 204508 / S288c) (Baker's yeast).